The following is a 247-amino-acid chain: Ras-like protein family member 11B (247 aa).

The tract at residues 29–247 is small GTPase-like; it reads ASSRVIKIAV…SAKVRTATSV (219 aa). GTP is bound by residues 40–47, 87–91, and 152–155; these read GGSGVGKT, DTPGV, and NKAD. The segment at 205 to 228 is disordered; it reads QNTGTPERRKNSLIPRPKSPNMQD.

This sequence belongs to the small GTPase superfamily. Ras family.

The catalysed reaction is GTP + H2O = GDP + phosphate + H(+). In Xenopus tropicalis (Western clawed frog), this protein is Ras-like protein family member 11B.